Here is a 905-residue protein sequence, read N- to C-terminus: DNA mismatch repair protein MutS (905 aa).

The interval 389-410 is disordered; it reads ERPANPEGTYPTDAETSGDTLP. Residue 638 to 645 participates in ATP binding; the sequence is GPNMAGKS. Positions 826-847 are disordered; sequence RDAARGTNSAPSRQTLPGLDLP. The segment covering 831–840 has biased composition (polar residues); sequence GTNSAPSRQT.

It belongs to the DNA mismatch repair MutS family.

Its function is as follows. This protein is involved in the repair of mismatches in DNA. It is possible that it carries out the mismatch recognition step. This protein has a weak ATPase activity. This is DNA mismatch repair protein MutS from Nitratidesulfovibrio vulgaris (strain ATCC 29579 / DSM 644 / CCUG 34227 / NCIMB 8303 / VKM B-1760 / Hildenborough) (Desulfovibrio vulgaris).